The chain runs to 599 residues: Sulfite reductase [NADPH] flavoprotein alpha-component (599 aa).

Residues 64–202 (VTLISASQTG…AASEWRACVV (139 aa)) enclose the Flavodoxin-like domain. FMN-binding positions include 70–75 (SQTGNA), 117–120 (STQG), and 153–162 (LGDTSYEFFC). The region spanning 234–448 (DAPLTATLSV…IEHNDNFRLP (215 aa)) is the FAD-binding FR-type domain. FAD contacts are provided by residues T322, A356, 386–389 (RLYS), 404–406 (TVG), Y410, and 419–422 (GGAS). NADP(+) is bound by residues 519–520 (SR), 525–529 (KIYVQ), and D561. Y599 contributes to the FAD binding site.

The protein belongs to the NADPH-dependent sulphite reductase flavoprotein subunit CysJ family. In the N-terminal section; belongs to the flavodoxin family. This sequence in the C-terminal section; belongs to the flavoprotein pyridine nucleotide cytochrome reductase family. Alpha(8)-beta(8). The alpha component is a flavoprotein, the beta component is a hemoprotein. The cofactor is FAD. FMN serves as cofactor.

The catalysed reaction is hydrogen sulfide + 3 NADP(+) + 3 H2O = sulfite + 3 NADPH + 4 H(+). The protein operates within sulfur metabolism; hydrogen sulfide biosynthesis; hydrogen sulfide from sulfite (NADPH route): step 1/1. Its function is as follows. Component of the sulfite reductase complex that catalyzes the 6-electron reduction of sulfite to sulfide. This is one of several activities required for the biosynthesis of L-cysteine from sulfate. The flavoprotein component catalyzes the electron flow from NADPH -&gt; FAD -&gt; FMN to the hemoprotein component. This Salmonella typhi protein is Sulfite reductase [NADPH] flavoprotein alpha-component.